A 246-amino-acid chain; its full sequence is Thiamine import ATP-binding protein ThiQ (246 aa).

In terms of domain architecture, ABC transporter spans 10–239 (VKLDALAFAY…QGPPAFARYL (230 aa)). 41-48 (GPSGSGKS) lines the ATP pocket.

This sequence belongs to the ABC transporter superfamily. Thiamine importer (TC 3.A.1.19.1) family. As to quaternary structure, the complex is composed of two ATP-binding proteins (ThiQ), two transmembrane proteins (ThiP) and a solute-binding protein (ThiB).

The protein resides in the cell inner membrane. The catalysed reaction is thiamine(out) + ATP + H2O = thiamine(in) + ADP + phosphate + H(+). In terms of biological role, part of the ABC transporter complex ThiBPQ involved in thiamine import. Responsible for energy coupling to the transport system. The polypeptide is Thiamine import ATP-binding protein ThiQ (Chelativorans sp. (strain BNC1)).